We begin with the raw amino-acid sequence, 476 residues long: UDP-N-acetylmuramate--L-alanine ligase (476 aa).

An ATP-binding site is contributed by 125 to 131 (GTHGKTT).

Belongs to the MurCDEF family.

It localises to the cytoplasm. The enzyme catalyses UDP-N-acetyl-alpha-D-muramate + L-alanine + ATP = UDP-N-acetyl-alpha-D-muramoyl-L-alanine + ADP + phosphate + H(+). It functions in the pathway cell wall biogenesis; peptidoglycan biosynthesis. Functionally, cell wall formation. This is UDP-N-acetylmuramate--L-alanine ligase from Histophilus somni (strain 129Pt) (Haemophilus somnus).